Consider the following 234-residue polypeptide: Sugar fermentation stimulation protein homolog (234 aa).

Belongs to the SfsA family.

The protein is Sugar fermentation stimulation protein homolog of Shewanella sp. (strain ANA-3).